The sequence spans 595 residues: Aspartate--tRNA(Asp/Asn) ligase (595 aa).

Glu-175 contributes to the L-aspartate binding site. An aspartate region spans residues 199–202 (QQYK). Positions 221 and 454 each coordinate L-aspartate. 221-223 (RDE) provides a ligand contact to ATP. Glu-488 is a binding site for ATP. Arg-495 provides a ligand contact to L-aspartate. Position 540 to 543 (540 to 543 (GIDR)) interacts with ATP.

It belongs to the class-II aminoacyl-tRNA synthetase family. Type 1 subfamily. As to quaternary structure, homodimer.

It is found in the cytoplasm. The enzyme catalyses tRNA(Asx) + L-aspartate + ATP = L-aspartyl-tRNA(Asx) + AMP + diphosphate. Its function is as follows. Aspartyl-tRNA synthetase with relaxed tRNA specificity since it is able to aspartylate not only its cognate tRNA(Asp) but also tRNA(Asn). Reaction proceeds in two steps: L-aspartate is first activated by ATP to form Asp-AMP and then transferred to the acceptor end of tRNA(Asp/Asn). The polypeptide is Aspartate--tRNA(Asp/Asn) ligase (Brucella canis (strain ATCC 23365 / NCTC 10854 / RM-666)).